The following is a 490-amino-acid chain: Ribulose bisphosphate carboxylase large chain (490 aa).

The substrate site is built by Asn127 and Thr177. Catalysis depends on Lys179, which acts as the Proton acceptor. Lys181 contacts substrate. Mg(2+)-binding residues include Lys205, Asp207, and Glu208. Lys205 is modified (N6-carboxylysine). His297 acts as the Proton acceptor in catalysis. Substrate contacts are provided by Arg298, His330, and Ser382.

The protein belongs to the RuBisCO large chain family. Type I subfamily. As to quaternary structure, heterohexadecamer of 8 large chains and 8 small chains. Mg(2+) is required as a cofactor.

Its subcellular location is the plastid. It is found in the chloroplast. The enzyme catalyses 2 (2R)-3-phosphoglycerate + 2 H(+) = D-ribulose 1,5-bisphosphate + CO2 + H2O. The catalysed reaction is D-ribulose 1,5-bisphosphate + O2 = 2-phosphoglycolate + (2R)-3-phosphoglycerate + 2 H(+). Functionally, ruBisCO catalyzes two reactions: the carboxylation of D-ribulose 1,5-bisphosphate, the primary event in carbon dioxide fixation, as well as the oxidative fragmentation of the pentose substrate in the photorespiration process. Both reactions occur simultaneously and in competition at the same active site. In Detonula confervacea (Marine diatom), this protein is Ribulose bisphosphate carboxylase large chain.